Here is a 51-residue protein sequence, read N- to C-terminus: rpoE leader peptide (51 aa).

Functionally, a short protein whose stop codon overlaps with the start codon of downstream rpoE; a premature stop codon at position 12 results in decreased expression of ECF sigma factor RpoE, thus they are translationally coupled. The polypeptide is rpoE leader peptide (Escherichia coli (strain K12)).